The sequence spans 707 residues: Coiled-coil domain-containing protein 177 (707 aa).

Disordered regions lie at residues 1 to 65 (MVDP…EGGR) and 183 to 294 (PSAG…SALT). Low complexity-rich tracts occupy residues 38 to 49 (AASSASASASAA), 183 to 215 (PSAGSSSSCSSASLPASPAPRAARKASPSPSSA), and 243 to 258 (ALSSESGASSSSYSGE). Phosphoserine is present on Ser311. A coiled-coil region spans residues 364-605 (GQWELQRVHA…LQHATQVAEE (242 aa)). Disordered regions lie at residues 372 to 426 (HAKQ…RSEE), 454 to 581 (KLQQ…EREH), 597 to 637 (QHAT…RDED), and 652 to 707 (ERSE…LDRK). Basic and acidic residues-rich tracts occupy residues 377–392 (REREEREKQRALEQGR), 399–426 (VEERRGRRGREEREAARRRQRQYERSEE), 454–484 (KLQQEQNLKQREEGLQEGRERAEQIRRERAQ), 491–514 (QRQEGQLQREKRELSRAERARHEA), 543–581 (ENYEHLVEQRTRELRERARREELQGRRAKEAAERKEREH), 618–637 (RLEKERAQRANKEKVERDED), and 652–664 (ERSEQLTRERRSA). Over residues 665-675 (LESARSTARAS) the composition is skewed to low complexity. Over residues 677–707 (HVREKVREETNTRSFDRMVREAQLHASLDRK) the composition is skewed to basic and acidic residues.

This Homo sapiens (Human) protein is Coiled-coil domain-containing protein 177 (CCDC177).